We begin with the raw amino-acid sequence, 60 residues long: Large ribosomal subunit protein uL30 (60 aa).

It belongs to the universal ribosomal protein uL30 family. In terms of assembly, part of the 50S ribosomal subunit.

This chain is Large ribosomal subunit protein uL30, found in Finegoldia magna (strain ATCC 29328 / DSM 20472 / WAL 2508) (Peptostreptococcus magnus).